A 351-amino-acid polypeptide reads, in one-letter code: Protein RecA (351 aa).

68–75 (GPESSGKT) is a binding site for ATP.

The protein belongs to the RecA family.

It is found in the cytoplasm. Its function is as follows. Can catalyze the hydrolysis of ATP in the presence of single-stranded DNA, the ATP-dependent uptake of single-stranded DNA by duplex DNA, and the ATP-dependent hybridization of homologous single-stranded DNAs. It interacts with LexA causing its activation and leading to its autocatalytic cleavage. In Chloroflexus aggregans (strain MD-66 / DSM 9485), this protein is Protein RecA.